Reading from the N-terminus, the 271-residue chain is 4-hydroxy-tetrahydrodipicolinate reductase (271 aa).

Residues 10–15, Glu-36, 100–102, and 124–127 contribute to the NAD(+) site; these read GAGGRM, GTT, and SGNM. The active-site Proton donor/acceptor is His-157. His-158 is a binding site for (S)-2,3,4,5-tetrahydrodipicolinate. The active-site Proton donor is Lys-161. Residue 167–168 participates in (S)-2,3,4,5-tetrahydrodipicolinate binding; the sequence is GT.

It belongs to the DapB family.

It localises to the cytoplasm. It catalyses the reaction (S)-2,3,4,5-tetrahydrodipicolinate + NAD(+) + H2O = (2S,4S)-4-hydroxy-2,3,4,5-tetrahydrodipicolinate + NADH + H(+). It carries out the reaction (S)-2,3,4,5-tetrahydrodipicolinate + NADP(+) + H2O = (2S,4S)-4-hydroxy-2,3,4,5-tetrahydrodipicolinate + NADPH + H(+). Its pathway is amino-acid biosynthesis; L-lysine biosynthesis via DAP pathway; (S)-tetrahydrodipicolinate from L-aspartate: step 4/4. Catalyzes the conversion of 4-hydroxy-tetrahydrodipicolinate (HTPA) to tetrahydrodipicolinate. This Rhodopseudomonas palustris (strain ATCC BAA-98 / CGA009) protein is 4-hydroxy-tetrahydrodipicolinate reductase.